A 90-amino-acid chain; its full sequence is Sec-independent protein translocase protein TatA (90 aa).

The chain crosses the membrane as a helical span at residues 1–21 (MGSMSIWHWVIVAVIVMLLFG). The interval 44-90 (AEDETPPAVQAAPPPAEPVRTIPHATETSPGTAIPASHLPGGERKPV) is disordered.

It belongs to the TatA/E family. As to quaternary structure, the Tat system comprises two distinct complexes: a TatABC complex, containing multiple copies of TatA, TatB and TatC subunits, and a separate TatA complex, containing only TatA subunits. Substrates initially bind to the TatABC complex, which probably triggers association of the separate TatA complex to form the active translocon.

It is found in the cell inner membrane. Part of the twin-arginine translocation (Tat) system that transports large folded proteins containing a characteristic twin-arginine motif in their signal peptide across membranes. TatA could form the protein-conducting channel of the Tat system. The protein is Sec-independent protein translocase protein TatA of Methylobacterium radiotolerans (strain ATCC 27329 / DSM 1819 / JCM 2831 / NBRC 15690 / NCIMB 10815 / 0-1).